Consider the following 438-residue polypeptide: Xylose isomerase (438 aa).

Residues His100 and Asp103 contribute to the active site. Residues Glu231, Glu267, His270, Asp295, Asp306, Asp308, and Asp338 each coordinate Mg(2+).

The protein belongs to the xylose isomerase family. Homotetramer. The cofactor is Mg(2+).

It is found in the cytoplasm. The catalysed reaction is alpha-D-xylose = alpha-D-xylulofuranose. This chain is Xylose isomerase, found in Pseudomonas fluorescens (strain Pf0-1).